Consider the following 799-residue polypeptide: Cadherin-8 (799 aa).

Positions 1-29 (MPERLAETLMDLWTPLIILWITLPSCVYT) are cleaved as a signal peptide. A propeptide spanning residues 30 to 61 (APMNQAHVLTTGSPLELSRQSEDMRILSRSKR) is cleaved from the precursor. Cadherin domains lie at 62 to 167 (GWVW…APEF), 168 to 276 (LNGP…PPKF), 277 to 391 (AQSL…PPVF), 392 to 494 (SSPT…DNAP), and 495 to 616 (EFAS…YVLP). At 62 to 621 (GWVWNQMFVL…AYVLPIGLSM (560 aa)) the chain is on the extracellular side. Asn-188 carries N-linked (GlcNAc...) asparagine glycosylation. 3 N-linked (GlcNAc...) asparagine glycosylation sites follow: Asn-463, Asn-473, and Asn-544. A helical membrane pass occupies residues 622–642 (GALIAILACIILLLVIVVLFV). Topologically, residues 643–799 (TLRRHKNEPL…YSVGESDKET (157 aa)) are cytoplasmic. Ser-795 carries the phosphoserine modification.

Its subcellular location is the cell membrane. In terms of biological role, cadherins are calcium-dependent cell adhesion proteins. They preferentially interact with themselves in a homophilic manner in connecting cells; cadherins may thus contribute to the sorting of heterogeneous cell types. This Mus musculus (Mouse) protein is Cadherin-8 (Cdh8).